We begin with the raw amino-acid sequence, 227 residues long: Small ribosomal subunit protein uS3 (227 aa).

Residues 39–107 (VRQLLQKRLK…PVHITIEEVR (69 aa)) form the KH type-2 domain.

It belongs to the universal ribosomal protein uS3 family. Part of the 30S ribosomal subunit. Forms a tight complex with proteins S10 and S14.

In terms of biological role, binds the lower part of the 30S subunit head. Binds mRNA in the 70S ribosome, positioning it for translation. The chain is Small ribosomal subunit protein uS3 (rpsC) from Coxiella burnetii (strain RSA 493 / Nine Mile phase I).